A 127-amino-acid polypeptide reads, in one-letter code: Fatty acid-binding protein, liver (127 aa).

Met1 carries the N-acetylmethionine modification. N6-succinyllysine occurs at positions 31 and 36. At Ser39 the chain carries Phosphoserine. N6-succinyllysine is present on Lys46. Residue Ser56 is modified to Phosphoserine. 3 positions are modified to N6-succinyllysine: Lys57, Lys78, and Lys90. Ser100 is subject to Phosphoserine. A Deamidated asparagine; alternate modification is found at Asn105. Positions 105–106 (NG) form a cross-link, isoaspartyl glycine isopeptide (Asn-Gly); alternate. N6-succinyllysine is present on Lys121.

It belongs to the calycin superfamily. Fatty-acid binding protein (FABP) family. In terms of assembly, monomer. Deamidation and transpeptidation at the beta carboxyl of Asn-105 forms an isoaspartyl residue and Edman degradation appears as though blocked. This rearrangement gives rise to an extra negative charge carried by the acid form.

It is found in the cytoplasm. In terms of biological role, plays a role in lipoprotein-mediated cholesterol uptake in hepatocytes. Binds cholesterol. Binds free fatty acids and their coenzyme A derivatives, bilirubin, and some other small molecules in the cytoplasm. May be involved in intracellular lipid transport. The polypeptide is Fatty acid-binding protein, liver (FABP1) (Bos taurus (Bovine)).